Reading from the N-terminus, the 140-residue chain is Endoribonuclease YbeY (140 aa).

Residues H99, H103, and H109 each contribute to the Zn(2+) site.

This sequence belongs to the endoribonuclease YbeY family. The cofactor is Zn(2+).

The protein resides in the cytoplasm. In terms of biological role, single strand-specific metallo-endoribonuclease involved in late-stage 70S ribosome quality control and in maturation of the 3' terminus of the 16S rRNA. The protein is Endoribonuclease YbeY of Wolinella succinogenes (strain ATCC 29543 / DSM 1740 / CCUG 13145 / JCM 31913 / LMG 7466 / NCTC 11488 / FDC 602W) (Vibrio succinogenes).